Reading from the N-terminus, the 194-residue chain is Large ribosomal subunit protein bL17 (194 aa).

Residues 126–194 form a disordered region; that stretch reads AEPKQTKART…SPEQTNKQEE (69 aa). A compositionally biased stretch (basic residues) spans 131 to 140; it reads TKARTRRGKG. Polar residues-rich tracts occupy residues 144-161 and 181-194; these read ATTT…QDMA and LDTQ…KQEE.

The protein belongs to the bacterial ribosomal protein bL17 family. As to quaternary structure, part of the 50S ribosomal subunit. Contacts protein L32.

The polypeptide is Large ribosomal subunit protein bL17 (Amoebophilus asiaticus (strain 5a2)).